Reading from the N-terminus, the 207-residue chain is MTKLSKRQQQILEFIKQEVKTKGYPPSVREIGEAVGLASSSTVHGHLARLESKGYIRRDPTKPRAIEILDNDMAKEREKEEIISVPIIGKVTAGQPITAVENIEGYFPLPKRLAAGEEQLFMLEVMGDSMIEAGILDGDYVIVRQQSSANNGDIVVAMTEDNEATVKRFFKEKDHIRLQPENAHLEPIIVRDCTILGKVIGVYRLFD.

A DNA-binding region (H-T-H motif) is located at residues 28-48 (VREIGEAVGLASSSTVHGHLA). Catalysis depends on for autocatalytic cleavage activity residues Ser-129 and Lys-167.

Belongs to the peptidase S24 family. Homodimer.

The catalysed reaction is Hydrolysis of Ala-|-Gly bond in repressor LexA.. Its function is as follows. Represses a number of genes involved in the response to DNA damage (SOS response), including recA and lexA. In the presence of single-stranded DNA, RecA interacts with LexA causing an autocatalytic cleavage which disrupts the DNA-binding part of LexA, leading to derepression of the SOS regulon and eventually DNA repair. In Geobacillus kaustophilus (strain HTA426), this protein is LexA repressor.